We begin with the raw amino-acid sequence, 502 residues long: 4-hydroxy-3-methylbut-2-enyl diphosphate reductase, chloroplastic (502 aa).

Residues 1-48 (MQVLPQTRVQGVPSGRNLSCSKAVGGTPLRALTRDVVRPARSVNVHVV) constitute a chloroplast transit peptide. C140 is a [4Fe-4S] cluster binding site. H170 is a binding site for (2E)-4-hydroxy-3-methylbut-2-enyl diphosphate. A [4Fe-4S] cluster-binding site is contributed by C232. (2E)-4-hydroxy-3-methylbut-2-enyl diphosphate is bound at residue H260. The Proton donor role is filled by E262. T325 contacts (2E)-4-hydroxy-3-methylbut-2-enyl diphosphate. A [4Fe-4S] cluster-binding site is contributed by C363. (2E)-4-hydroxy-3-methylbut-2-enyl diphosphate is bound by residues 398 to 400 (SSN) and S461.

This sequence belongs to the IspH family. Homodimer. [4Fe-4S] cluster serves as cofactor.

It localises to the plastid. The protein resides in the chloroplast stroma. The enzyme catalyses dimethylallyl diphosphate + 2 oxidized [2Fe-2S]-[ferredoxin] + H2O = (2E)-4-hydroxy-3-methylbut-2-enyl diphosphate + 2 reduced [2Fe-2S]-[ferredoxin] + 2 H(+). The catalysed reaction is isopentenyl diphosphate + 2 oxidized [2Fe-2S]-[ferredoxin] + H2O = (2E)-4-hydroxy-3-methylbut-2-enyl diphosphate + 2 reduced [2Fe-2S]-[ferredoxin] + 2 H(+). The protein operates within isoprenoid biosynthesis; dimethylallyl diphosphate biosynthesis; dimethylallyl diphosphate from (2E)-4-hydroxy-3-methylbutenyl diphosphate: step 1/1. Its pathway is isoprenoid biosynthesis; isopentenyl diphosphate biosynthesis via DXP pathway; isopentenyl diphosphate from 1-deoxy-D-xylulose 5-phosphate: step 6/6. Enzyme of the plastid non-mevalonate pathway for isoprenoid biosynthesis that converts 1-hydroxy-2-methyl-2-(E)-butenyl 4-diphosphate into isopentenyl diphosphate (IPP) and dimethylallyl diphosphate (DMAPP). In Botryococcus braunii (Green alga), this protein is 4-hydroxy-3-methylbut-2-enyl diphosphate reductase, chloroplastic.